Reading from the N-terminus, the 77-residue chain is MPKCPKCNKEVYFAERVTSLGKDWHRPCLKCEKCGKTLTSGGHAEHEGKPYCNHPCYAAMFGPKGFGRGGAESHTFK.

An LIM zinc-binding domain is found at 2–63 (PKCPKCNKEV…HPCYAAMFGP (62 aa)). 2 positions are modified to N6-acetyllysine: Lys9 and Lys22. Arg68 bears the Omega-N-methylarginine mark.

Seems to have a role in zinc absorption and may function as an intracellular zinc transport protein. The polypeptide is Cysteine-rich protein 1 (CRIP1) (Homo sapiens (Human)).